The chain runs to 289 residues: 33 kDa chaperonin (289 aa).

2 disulfides stabilise this stretch: Cys-225–Cys-227 and Cys-258–Cys-261.

It belongs to the HSP33 family. In terms of processing, under oxidizing conditions two disulfide bonds are formed involving the reactive cysteines. Under reducing conditions zinc is bound to the reactive cysteines and the protein is inactive.

Its subcellular location is the cytoplasm. Functionally, redox regulated molecular chaperone. Protects both thermally unfolding and oxidatively damaged proteins from irreversible aggregation. Plays an important role in the bacterial defense system toward oxidative stress. The polypeptide is 33 kDa chaperonin (Nitrosococcus oceani (strain ATCC 19707 / BCRC 17464 / JCM 30415 / NCIMB 11848 / C-107)).